We begin with the raw amino-acid sequence, 320 residues long: Aspartate carbamoyltransferase catalytic subunit (320 aa).

Arg68 and Thr69 together coordinate carbamoyl phosphate. Lys96 contacts L-aspartate. Residues Arg118, His148, and Gln151 each coordinate carbamoyl phosphate. L-aspartate contacts are provided by Arg181 and Arg236. Carbamoyl phosphate-binding residues include Gly277 and Pro278.

This sequence belongs to the aspartate/ornithine carbamoyltransferase superfamily. ATCase family. Heterododecamer (2C3:3R2) of six catalytic PyrB chains organized as two trimers (C3), and six regulatory PyrI chains organized as three dimers (R2).

The catalysed reaction is carbamoyl phosphate + L-aspartate = N-carbamoyl-L-aspartate + phosphate + H(+). It functions in the pathway pyrimidine metabolism; UMP biosynthesis via de novo pathway; (S)-dihydroorotate from bicarbonate: step 2/3. Functionally, catalyzes the condensation of carbamoyl phosphate and aspartate to form carbamoyl aspartate and inorganic phosphate, the committed step in the de novo pyrimidine nucleotide biosynthesis pathway. The sequence is that of Aspartate carbamoyltransferase catalytic subunit from Delftia acidovorans (strain DSM 14801 / SPH-1).